The following is a 436-amino-acid chain: Trigger factor (436 aa).

Residues 161–246 (DDQLNIDFVG…VNSVAEPKLP (86 aa)) form the PPIase FKBP-type domain.

Belongs to the FKBP-type PPIase family. Tig subfamily.

It is found in the cytoplasm. It catalyses the reaction [protein]-peptidylproline (omega=180) = [protein]-peptidylproline (omega=0). In terms of biological role, involved in protein export. Acts as a chaperone by maintaining the newly synthesized protein in an open conformation. Functions as a peptidyl-prolyl cis-trans isomerase. This Pseudomonas paraeruginosa (strain DSM 24068 / PA7) (Pseudomonas aeruginosa (strain PA7)) protein is Trigger factor.